Reading from the N-terminus, the 548-residue chain is MFS-rype transporter paaT (548 aa).

Residues 1-10 (MEAPRSDQAH) show a composition bias toward basic and acidic residues. The segment at 1-32 (MEAPRSDQAHTDATTPMEAIRTTSLGTNNYGP) is disordered. Over residues 21-30 (RTTSLGTNNY) the composition is skewed to polar residues. 2 N-linked (GlcNAc...) asparagine glycosylation sites follow: N70 and N93. 12 helical membrane passes run 100-120 (WYCT…SSVI), 139-159 (LVVI…FAPM), 174-194 (ALAV…TLIV), 197-217 (LIDG…LADL), 224-244 (GVPM…GPLV), 256-276 (WLYW…TFTV), 332-352 (IVLF…MFFV), 370-390 (GLMF…APFV), 411-431 (LIPM…FAWT), 436-456 (LHWM…ILLY), 471-493 (AASA…VLFT), and 505-525 (ASTL…VFYF). The short motif at 258–269 (YWIQLILAFVAW) is the Peroxisomal targeting signal element.

The protein belongs to the major facilitator superfamily. DHA1 family. Polyamines/proton antiporter (TC 2.A.1.2.16) subfamily.

It localises to the peroxisome membrane. Its function is as follows. MFS-type transporter involved in penicillin production, most likely through the translocation of side-chain precursors (phenylacetic acid and phenoxyacetic acid) from the cytosol to the peroxisomal lumen across the peroxisomal membrane. The polypeptide is MFS-rype transporter paaT (Penicillium rubens (strain ATCC 28089 / DSM 1075 / NRRL 1951 / Wisconsin 54-1255) (Penicillium chrysogenum)).